Consider the following 515-residue polypeptide: Cytoplasmic dynein 1 light intermediate chain 1 (515 aa).

A compositionally biased stretch (low complexity) spans 1–24 (MAAVGRAGSFGSSSASGAANNASA). The disordered stretch occupies residues 1 to 34 (MAAVGRAGSFGSSSASGAANNASAELRAGGEEDD). Residue 64–71 (GEDGAGKT) coordinates ATP. Disordered stretches follow at residues 370 to 424 (QSQL…DPNM) and 445 to 515 (KTGS…GEAS). Residues 397-409 (RTPNRSVTSNVAS) are compositionally biased toward polar residues. The segment covering 448 to 468 (SPGGPGGVGGSPGGGSAGGTG) has biased composition (gly residues). Residues 490–499 (ELDRISRKPE) show a composition bias toward basic and acidic residues. Over residues 502–515 (SPTSPTSPTEGEAS) the composition is skewed to polar residues.

It belongs to the dynein light intermediate chain family. As to quaternary structure, homodimer. The cytoplasmic dynein 1 complex consists of two catalytic heavy chains (HCs) and a number of non-catalytic subunits presented by intermediate chains (ICs). In terms of processing, phosphorylated.

It is found in the cytoplasm. The protein localises to the cytoskeleton. Its subcellular location is the chromosome. It localises to the centromere. The protein resides in the kinetochore. It is found in the spindle pole. The protein localises to the recycling endosome membrane. In terms of biological role, acts as one of several non-catalytic accessory components of the cytoplasmic dynein 1 complex that are thought to be involved in linking dynein to cargos and to adapter proteins that regulate dynein function. Cytoplasmic dynein 1 acts as a motor for the intracellular retrograde motility of vesicles and organelles along microtubules. May play a role in binding dynein to membranous organelles or chromosomes. May regulate the movement of peripheral sorting endosomes along microtubule tracks toward the microtubule organizing center/centrosome, generating the endosomal recycling compartment. The protein is Cytoplasmic dynein 1 light intermediate chain 1 (DYNC1LI1) of Gallus gallus (Chicken).